The sequence spans 228 residues: MMVSMRDMLNAGVHFGHQTRYWNPKMKPFIFGSKNKVHIINLEKTMTMFNFALFELKKISLRKGKILFVGTKQSASKIIKESAILCKQFYVNHRWLGGMLTNWKTVRQSIKRLKDLESQSQDGTFNKLTKKEVLLRMRELSKLENSLGGIKEMGSLPDALFVVDADHEHIAIREANNLGISVFSIVDTNSDPDGVDFIIPGNDDAIRAVNLYLNAVSKVIKKNVKNEK.

This sequence belongs to the universal ribosomal protein uS2 family.

The sequence is that of Small ribosomal subunit protein uS2 from Buchnera aphidicola subsp. Baizongia pistaciae (strain Bp).